Here is a 1607-residue protein sequence, read N- to C-terminus: Laminin subunit gamma-1 (1607 aa).

An N-terminal signal peptide occupies residues 1–33 (MTGGGRAALALQPRGRLWPLLAVLAAVAGCVRA). The region spanning 44–283 (RPQRCMPEFV…AISDFAVGGR (240 aa)) is the Laminin N-terminal domain. Asparagine 58 and asparagine 132 each carry an N-linked (GlcNAc...) asparagine glycan. Intrachain disulfides connect cysteine 284–cysteine 293, cysteine 286–cysteine 303, cysteine 305–cysteine 314, cysteine 340–cysteine 349, cysteine 342–cysteine 365, cysteine 368–cysteine 377, cysteine 380–cysteine 393, cysteine 396–cysteine 408, cysteine 398–cysteine 414, cysteine 416–cysteine 425, cysteine 428–cysteine 440, cysteine 443–cysteine 454, cysteine 445–cysteine 461, cysteine 463–cysteine 472, and cysteine 475–cysteine 490. Laminin EGF-like domains are found at residues 284–339 (CKCN…ESLP), 340–395 (CDCN…ACSP), 396–442 (CHCS…GCRP), and 443–492 (CSCD…GCTP). Residues 493–502 (CFCFGHSSVC) form the Laminin EGF-like 5; first part domain. Residues 512 to 687 (DISSTFQIDE…PGVPATWVES (176 aa)) enclose the Laminin IV type A domain. Residues asparagine 574 and asparagine 648 are each glycosylated (N-linked (GlcNAc...) asparagine). Positions 688–721 (CTCPVGYGGQFCETCLPGYRRETPSLGPYSPCVL) constitute a Laminin EGF-like 5; second part domain. Cystine bridges form between cysteine 722–cysteine 731, cysteine 724–cysteine 738, cysteine 740–cysteine 749, cysteine 752–cysteine 768, cysteine 771–cysteine 779, cysteine 773–cysteine 790, cysteine 793–cysteine 802, cysteine 805–cysteine 823, cysteine 826–cysteine 840, cysteine 828–cysteine 847, cysteine 850–cysteine 859, cysteine 862–cysteine 879, cysteine 882–cysteine 896, cysteine 884–cysteine 903, cysteine 905–cysteine 914, cysteine 917–cysteine 930, cysteine 933–cysteine 945, cysteine 935–cysteine 952, cysteine 954–cysteine 963, cysteine 966–cysteine 978, cysteine 981–cysteine 993, cysteine 983–cysteine 999, cysteine 1001–cysteine 1010, and cysteine 1013–cysteine 1026. 2 Laminin EGF-like domains span residues 722–770 (CTCN…DCQP) and 771–825 (CPCP…LCRP). One can recognise a Laminin EGF-like 8; nidogen-binding domain in the interval 826–881 (CQCNDNIDPNAVGNCNRLTGECLKCIYNTAGFYCDRCKEGFFGNPLAPNPADKCKA). Laminin EGF-like domains follow at residues 882–932 (CACN…GCER), 933–980 (CDCH…GCKP), and 981–1028 (CDCH…GCQE). Residues asparagine 1020 and asparagine 1105 are each glycosylated (N-linked (GlcNAc...) asparagine). The domain II and I stretch occupies residues 1029-1607 (CPACYRLVKD…CFNTPSIEKP (579 aa)). Positions 1034–1594 (RLVKDKAAEH…HNLEDIKKTL (561 aa)) form a coiled coil. Serine 1147 carries the post-translational modification Phosphoserine. Residues asparagine 1159, asparagine 1173, asparagine 1203, asparagine 1221, asparagine 1239, asparagine 1378, asparagine 1393, and asparagine 1437 are each glycosylated (N-linked (GlcNAc...) asparagine). Serine 1491 is subject to Phosphoserine.

As to quaternary structure, laminin is a complex glycoprotein, consisting of three different polypeptide chains (alpha, beta, gamma), which are bound to each other by disulfide bonds into a cross-shaped molecule comprising one long and three short arms with globules at each end. Gamma-1 is a subunit of laminin-1 (laminin-111 or EHS laminin), laminin-2 (laminin-211 or merosin), laminin-3 (laminin-121 or S-laminin), laminin-4 (laminin-221 or S-merosin), laminin-6 (laminin-311 or K-laminin), laminin-7 (laminin-321 or KS-laminin), laminin-8 (laminin-411), laminin-9 (laminin-421), laminin-10 (laminin-511) and laminin-11 (laminin-521). Interacts with SVEP1. In terms of tissue distribution, found in the basement membranes (major component).

It localises to the secreted. The protein localises to the extracellular space. It is found in the extracellular matrix. Its subcellular location is the basement membrane. Functionally, binding to cells via a high affinity receptor, laminin is thought to mediate the attachment, migration and organization of cells into tissues during embryonic development by interacting with other extracellular matrix components. This chain is Laminin subunit gamma-1 (Lamc1), found in Mus musculus (Mouse).